A 149-amino-acid polypeptide reads, in one-letter code: Heavy metal-associated isoprenylated plant protein 21 (149 aa).

The region spanning 25–88 (LQTVDIKVKM…RVKSTGKKAE (64 aa)) is the HMA domain. Cysteine 36 and cysteine 39 together coordinate a metal cation. Cysteine 146 carries the cysteine methyl ester modification. A lipid anchor (S-farnesyl cysteine) is attached at cysteine 146. Positions 147–149 (SIM) are cleaved as a propeptide — removed in mature form.

It belongs to the HIPP family. As to quaternary structure, interacts with ZHD11/HB29. Expressed at low levels in leaves and sepals.

It is found in the membrane. Functionally, heavy-metal-binding protein. Binds cadmium. May be involved in cadmium transport and play a role in cadmium detoxification. The polypeptide is Heavy metal-associated isoprenylated plant protein 21 (Arabidopsis thaliana (Mouse-ear cress)).